Consider the following 383-residue polypeptide: Delta(12) fatty acid desaturase FAD2 (383 aa).

The interval 1–29 (MGAGGRMQDPTNGGNKTEPEPIQRVPHEK) is disordered. A compositionally biased stretch (basic and acidic residues) spans 17 to 29 (TEPEPIQRVPHEK). 2 helical membrane-spanning segments follow: residues 50-70 (VIRSFSYVFYDLTIASILYYI) and 85-105 (VAWPVYWAVQGCVLTGVWVIA). Positions 106 to 110 (HECGH) match the Histidine box-1 motif. A helical membrane pass occupies residues 118-138 (WLDDTVGLVLHSFLLVPYFSW). Residues 142-146 (HRRHH) carry the Histidine box-2 motif. The next 3 membrane-spanning stretches (helical) occupy residues 180 to 200 (ILTLLVTLTLGWPLYLTFNVS), 226 to 246 (IFISDAGILAVVFVLFRLAMT), and 252 to 272 (VLTMYGGPLLVVNGFLVLITF). Residues 316 to 320 (HVAHH) carry the Histidine box-3 motif.

Belongs to the fatty acid desaturase type 1 family. Expressed in leaves, flower buds and developing seeds.

It localises to the membrane. Its pathway is lipid metabolism; polyunsaturated fatty acid biosynthesis. Functionally, catalyzes the desaturation of oleic acid to linoleic acid. Introduces a double bond at position 12 of 16:1(9Z) and 18:1(9Z). This Calendula officinalis (Pot marigold) protein is Delta(12) fatty acid desaturase FAD2.